Consider the following 186-residue polypeptide: Alkyl hydroperoxide reductase AhpD (186 aa).

C131 serves as the catalytic Proton donor. The cysteines at positions 131 and 134 are disulfide-linked. The Cysteine sulfenic acid (-SOH) intermediate role is filled by C134.

The protein belongs to the AhpD family.

The catalysed reaction is N(6)-[(R)-dihydrolipoyl]-L-lysyl-[lipoyl-carrier protein] + a hydroperoxide = N(6)-[(R)-lipoyl]-L-lysyl-[lipoyl-carrier protein] + an alcohol + H2O. Its function is as follows. Antioxidant protein with alkyl hydroperoxidase activity. Required for the reduction of the AhpC active site cysteine residues and for the regeneration of the AhpC enzyme activity. The sequence is that of Alkyl hydroperoxide reductase AhpD from Rhodospirillum centenum (strain ATCC 51521 / SW).